Consider the following 319-residue polypeptide: Taste receptor type 2 member 39 (319 aa).

At 1 to 16 the chain is on the extracellular side; it reads MAQPSNYWKQDVLPLS. Residues 17–37 form a helical membrane-spanning segment; the sequence is ILMLTLVATECTIGIIASGIV. Topologically, residues 38–65 are cytoplasmic; sequence MAVNAVSWVQKKAISITTRILLLLSVSR. Residues 66 to 86 form a helical membrane-spanning segment; sequence IGLQSIMLIEITSSIFNVAFY. The Extracellular portion of the chain corresponds to 87-97; it reads NSVLYRVSNVS. Residue asparagine 95 is glycosylated (N-linked (GlcNAc...) asparagine). The helical transmembrane segment at 98 to 118 threads the bilayer; it reads FVFLNYCSLWFAALLSFFHFV. Residues 119-137 are Cytoplasmic-facing; sequence KIANFSYPLFFKLKWRISE. The helical transmembrane segment at 138–158 threads the bilayer; it reads LMPWLLWLSVFISFSSSMFFS. At 159–194 the chain is on the extracellular side; that stretch reads KHKFTVNNNNSLSNNICNFTMKLYVVETNVVNVSFL. N-linked (GlcNAc...) asparagine glycosylation is found at asparagine 167, asparagine 176, and asparagine 190. Residues 195–215 form a helical membrane-spanning segment; sequence FISGILPPLTMFVATATLLIF. Over 216–247 the chain is Cytoplasmic; that stretch reads SLRRHTLNMRNSATGSRNPCIEAHMQAIKETS. A helical transmembrane segment spans residues 248–268; the sequence is CFLFLYILNAAALLLSTSNIV. The Extracellular segment spans residues 269 to 273; the sequence is DASLF. The helical transmembrane segment at 274-294 threads the bilayer; the sequence is WSIVIRIVLPVYPAGHSVLLI. Over 295-319 the chain is Cytoplasmic; the sequence is QNNPGLRRTWKHLQSQIHLYLQNRF.

Belongs to the G-protein coupled receptor T2R family.

It localises to the membrane. Functionally, putative taste receptor which may play a role in the perception of bitterness. In Mus musculus (Mouse), this protein is Taste receptor type 2 member 39 (Tas2r39).